The primary structure comprises 716 residues: Zinc finger protein 840 (716 aa).

A KRAB domain is found at 42-113; sequence VRFRDVAVVF…EREVTGDPCP (72 aa). 18 C2H2-type zinc fingers span residues 151 to 173, 207 to 229, 235 to 257, 277 to 299, 305 to 327, 333 to 355, 361 to 383, 389 to 411, 417 to 439, 445 to 467, 473 to 495, 501 to 523, 549 to 571, 577 to 599, 605 to 627, 633 to 655, 661 to 683, and 689 to 711; these read YECDDCGMAFGHVSQLTGHQKIH, FECNQCGETFNRPSKVIQHQSMH, YKCDVCQKAFRFLSSLSIHQRFH, FSCNFCGKTFHRFSEKTQHLLIH, YTCNYCKKEFNPYSKFILHQRTH, HKCDVCEKSFKSISNLNKHQKTH, FSCNECKKTFAQRTDLARHQQIH, FICSSCKKTFVRLSDLTQHKGTH, YQCTTCEKAFKYRSNFTKHQKTH, FACNECGKTYRLNWELNQHKKIH, YECGECGKRFNNNSNLNKHKKIH, FVCNQCGKAFSLNSKLSRHQRTH, FPCNECKKAFAQRMDLARHQQIH, YQCTTCEKAFKYQSNFTKHQKTH, FTCNECGKTFRLNWKLNQHKKIH, YECGECGKCFNNNSNLSKHKKIH, and FVCNQCGKAFSLNSKLSRHQITH. The interval 515 to 548 is disordered; sequence KLSRHQRTHNKKENSSKSVSNLNKHQKTHAGEKP.

This sequence belongs to the krueppel C2H2-type zinc-finger protein family.

The protein localises to the nucleus. Functionally, may be involved in transcriptional regulation. The polypeptide is Zinc finger protein 840 (ZNF840P) (Homo sapiens (Human)).